A 359-amino-acid polypeptide reads, in one-letter code: Biotin synthase (359 aa).

Residues 47-276 enclose the Radical SAM core domain; it reads HHGRRVRIHV…EADLRMAGGR (230 aa). The [4Fe-4S] cluster site is built by cysteine 65, cysteine 69, and cysteine 72. Residues cysteine 109, cysteine 141, cysteine 201, and arginine 271 each contribute to the [2Fe-2S] cluster site. Residues 320–359 form a disordered region; it reads EPVIVEDGPERQTPATADDTPSGDPEAADRRRQPSAGPAG.

It belongs to the radical SAM superfamily. Biotin synthase family. In terms of assembly, homodimer. [4Fe-4S] cluster serves as cofactor. The cofactor is [2Fe-2S] cluster.

The catalysed reaction is (4R,5S)-dethiobiotin + (sulfur carrier)-SH + 2 reduced [2Fe-2S]-[ferredoxin] + 2 S-adenosyl-L-methionine = (sulfur carrier)-H + biotin + 2 5'-deoxyadenosine + 2 L-methionine + 2 oxidized [2Fe-2S]-[ferredoxin]. It functions in the pathway cofactor biosynthesis; biotin biosynthesis; biotin from 7,8-diaminononanoate: step 2/2. Catalyzes the conversion of dethiobiotin (DTB) to biotin by the insertion of a sulfur atom into dethiobiotin via a radical-based mechanism. The polypeptide is Biotin synthase (Salinibacter ruber (strain DSM 13855 / M31)).